Reading from the N-terminus, the 503-residue chain is Pentatricopeptide repeat-containing protein At2g30100, chloroplastic (503 aa).

The N-terminal 50 residues, 1–50, are a transit peptide targeting the chloroplast; that stretch reads MAYAHVFASLTISTISLRRFLPRLHRNHSVKPNSRIICNLKLNYSAGKFR. 3 PPR repeats span residues 341 to 375, 376 to 410, and 411 to 445; these read IGVV…GREP, EADL…GSQR, and KKKT…GLHP.

The protein belongs to the PPR family. P subfamily.

The protein resides in the plastid. The protein localises to the chloroplast. This chain is Pentatricopeptide repeat-containing protein At2g30100, chloroplastic, found in Arabidopsis thaliana (Mouse-ear cress).